Reading from the N-terminus, the 223-residue chain is MIGELDFPFLGAGSTGGACGFAVANPPLYGMVSAGGPSVFNNGIGCGTCFQILCNGHPACSRRPITVTITDECPGGPCASEPAHFDLSGKAMGALARPGQGDRLRSAGVLRVYYRRVECLYRRTNIAFRMDPGANPYYISFVVEYENGDGDLAYIEIQPADGEFIPMQEMRSAVWKISSGSPLTGPFNIRLTSAESHKVVLAYNVIPANWKPNETYRSVVNFK.

In terms of domain architecture, Expansin-like EG45 spans 16–124; that stretch reads GGACGFAVAN…RRVECLYRRT (109 aa). 3 disulfide bridges follow: Cys-19/Cys-46, Cys-49/Cys-119, and Cys-54/Cys-60. Positions 137 to 218 constitute an Expansin-like CBD domain; sequence YYISFVVEYE…NWKPNETYRS (82 aa). Asn-213 is a glycosylation site (N-linked (GlcNAc...) asparagine).

It belongs to the expansin family. Expansin B subfamily.

Its subcellular location is the secreted. It is found in the cell wall. It localises to the membrane. Its function is as follows. May cause loosening and extension of plant cell walls by disrupting non-covalent bonding between cellulose microfibrils and matrix glucans. This is Expansin-B6 from Arabidopsis thaliana (Mouse-ear cress).